Consider the following 335-residue polypeptide: 1D-myo-inositol 2-acetamido-2-deoxy-alpha-D-glucopyranoside deacetylase (335 aa).

Residues His19, Asp22, and His158 each contribute to the Zn(2+) site.

It belongs to the MshB deacetylase family. It depends on Zn(2+) as a cofactor.

The catalysed reaction is 1D-myo-inositol 2-acetamido-2-deoxy-alpha-D-glucopyranoside + H2O = 1D-myo-inositol 2-amino-2-deoxy-alpha-D-glucopyranoside + acetate. In terms of biological role, catalyzes the deacetylation of 1D-myo-inositol 2-acetamido-2-deoxy-alpha-D-glucopyranoside (GlcNAc-Ins) in the mycothiol biosynthesis pathway. The polypeptide is 1D-myo-inositol 2-acetamido-2-deoxy-alpha-D-glucopyranoside deacetylase (Corynebacterium urealyticum (strain ATCC 43042 / DSM 7109)).